The following is an 88-amino-acid chain: uncharacterized protein (88 aa).

This is an uncharacterized protein from Escherichia coli (strain K12).